Reading from the N-terminus, the 383-residue chain is Odorant receptor 94b (383 aa).

The Cytoplasmic portion of the chain corresponds to 1–41 (MESTNRLSAIQTLLVIQRWIGLLKWENEGEDGVLTWLKRIY). A helical transmembrane segment spans residues 42 to 62 (PFVLHLPLTFTYIALMWYEAI). Over 63-70 (TSSDFEEA) the chain is Extracellular. A helical transmembrane segment spans residues 71 to 91 (GQVLYMSITELALVTKLLNIW). At 92 to 130 (YRRHEAASLIHELQHDPAFNLRNSEEIKFWQQNQRNFKR) the chain is on the cytoplasmic side. Residues 131-151 (IFYWYIWGSLFVAVMGYISVF) traverse the membrane as a helical segment. Residues 152-174 (FQEDYELPFGYYVPFEWRTRERY) are Extracellular-facing. A helical transmembrane segment spans residues 175–195 (FYAWGYNVVAMTLCCLSNILL). Over 196-250 (DTLGCYFMFHIASLFRLLGMRLEALKNAAEEKARPELRRIFQLHTKVRRLTRECE) the chain is Cytoplasmic. Residues 251 to 271 (VLVSPYVLSQVVFSAFIICFS) traverse the membrane as a helical segment. The Extracellular segment spans residues 272-284 (AYRLVHMGFKQRP). The chain crosses the membrane as a helical span at residues 285 to 305 (GLFVTTVQFVAVMIVQIFLPC). The Cytoplasmic segment spans residues 306–358 (YYGNELTFHANALTNSVFGTNWLEYSVGTRKLLNCYMEFLKRPVKVRAGVFFE). The chain crosses the membrane as a helical span at residues 359–379 (IGLPIFVKTINNAYSFFALLL). Topologically, residues 380–383 (KISK) are extracellular.

It belongs to the insect chemoreceptor superfamily. Heteromeric odorant receptor channel (TC 1.A.69) family. Or2a subfamily. Interacts with Orco. Complexes exist early in the endomembrane system in olfactory sensory neurons (OSNs), coupling these complexes to the conserved ciliary trafficking pathway.

The protein resides in the cell membrane. Odorant receptor which mediates acceptance or avoidance behavior, depending on its substrates. The odorant receptor repertoire encodes a large collection of odor stimuli that vary widely in identity, intensity, and duration. May form a complex with Orco to form odorant-sensing units, providing sensitive and prolonged odorant signaling and calcium permeability. The chain is Odorant receptor 94b (Or94b) from Drosophila melanogaster (Fruit fly).